A 200-amino-acid chain; its full sequence is Large ribosomal subunit protein uL4 (200 aa).

The tract at residues 38–75 is disordered; it reads GRQGSKQQKNRSDVSGGGKRPWRQKGTGRARAGTSRGP.

This sequence belongs to the universal ribosomal protein uL4 family. Part of the 50S ribosomal subunit.

One of the primary rRNA binding proteins, this protein initially binds near the 5'-end of the 23S rRNA. It is important during the early stages of 50S assembly. It makes multiple contacts with different domains of the 23S rRNA in the assembled 50S subunit and ribosome. Its function is as follows. Forms part of the polypeptide exit tunnel. This is Large ribosomal subunit protein uL4 from Azotobacter vinelandii (strain DJ / ATCC BAA-1303).